Reading from the N-terminus, the 107-residue chain is Large ribosomal subunit protein uL24 (107 aa).

The protein belongs to the universal ribosomal protein uL24 family. Part of the 50S ribosomal subunit.

One of two assembly initiator proteins, it binds directly to the 5'-end of the 23S rRNA, where it nucleates assembly of the 50S subunit. Its function is as follows. One of the proteins that surrounds the polypeptide exit tunnel on the outside of the subunit. This Malacoplasma penetrans (strain HF-2) (Mycoplasma penetrans) protein is Large ribosomal subunit protein uL24.